The primary structure comprises 1107 residues: Unconventional myosin-Ie (1107 aa).

Positions 19-692 (SGVDDMVLLS…SLFLLEEMRE (674 aa)) constitute a Myosin motor domain. 112-119 (GESGAGKT) is a binding site for ATP. Residues 581 to 591 (PHYIRCIKPNE) are actin-binding. The 30-residue stretch at 695 to 724 (YDGYARVIQKTWRKFVARKKYVQMREDASD) folds into the IQ domain. One can recognise a TH1 domain in the interval 730 to 922 (KERRRNSINR…NKVLQVSIGP (193 aa)). The segment at 920 to 1052 (IGPGLPKNAR…KPQPKPKPQV (133 aa)) is disordered. Composition is skewed to polar residues over residues 933–949 (RNTVSSRGYSGGTNNNY), 977–989 (SGNQRSNQKSLYT), and 998–1012 (RQQSTGSDRLSQTPE). Ser1001 is subject to Phosphoserine. Positions 1034–1051 (RPPPAGGRPKPQPKPKPQ) are enriched in pro residues. An SH3 domain is found at 1050 to 1107 (PQVPQCKALYAYDAQDTDELSFNANDVIDIIKEDPSGWWTGRLRGKQGLFPNNYVTKI).

This sequence belongs to the TRAFAC class myosin-kinesin ATPase superfamily. Myosin family. As to quaternary structure, interacts with CALM and F-actin. Interacts (via SH3 domain) with SYNJ1, DNM1 and DNM2. Interacts with ARL14EP. Interacts with CARMIL1. In terms of tissue distribution, detected in brain stem, brain cortex, cerebellum, stomach, colon, heart, lung, liver, spleen and kidney. Detected in utricle, cochlea, outer hair cell bundle cuticular plate and vestibular epithelia (at protein level). Detected in cochlea and vestibular tissues. Detected in kidney, lung, spleen and intestine.

Its subcellular location is the cytoplasm. It localises to the cytoskeleton. The protein localises to the cytoplasmic vesicle. It is found in the clathrin-coated vesicle. The protein resides in the cell junction. In terms of biological role, myosins are actin-based motor molecules with ATPase activity. Unconventional myosins serve in intracellular movements. Their highly divergent tails bind to membranous compartments, which are then moved relative to actin filaments. Binds to membranes containing anionic phospholipids via its tail domain. Involved in clathrin-mediated endocytosis and intracellular movement of clathrin-coated vesicles. Required for normal morphology of the glomerular basement membrane, normal development of foot processes by kidney podocytes and normal kidney function. In dendritic cells, may control the movement of class II-containing cytoplasmic vesicles along the actin cytoskeleton by connecting them with the actin network via ARL14EP and ARL14. The chain is Unconventional myosin-Ie (Myo1e) from Rattus norvegicus (Rat).